The following is a 212-amino-acid chain: ER lumen protein-retaining receptor 1-A (212 aa).

At 1-4 (MNIF) the chain is on the lumenal side. A helical transmembrane segment spans residues 5-24 (RFLGDISHLSAIFILLLKIW). Residues 25 to 32 (KSRSCAGI) lie on the Cytoplasmic side of the membrane. Residues 33-52 (SGKSQLLFAIVFTARYLDLF) traverse the membrane as a helical segment. The tract at residues 47 to 48 (RY) is interaction with the K-D-E-L motif on target proteins. The Lumenal segment spans residues 53-58 (TNYISF). Residues 59–79 (YNTSMKVVYVASSYATVWMIY) traverse the membrane as a helical segment. Topologically, residues 80–92 (SKFKATYDGNHDT) are cytoplasmic. Residues 93-110 (FRVEFLIVPTAILAFLVN) traverse the membrane as a helical segment. Residues 111–116 (HDFTPL) are Lumenal-facing. Residues 117-135 (EIFWTFSIYLESVAILPQL) form a helical membrane-spanning segment. The Cytoplasmic segment spans residues 136 to 149 (FMVSKTGEAETITS). A helical membrane pass occupies residues 150 to 168 (HYLFALGIYRTLYLFNWIW). The interaction with the K-D-E-L motif on target proteins stretch occupies residues 159–169 (RTLYLFNWIWR). The Lumenal portion of the chain corresponds to 169–178 (RYQFEGFFDL). A helical membrane pass occupies residues 179–199 (IAIVAGLVQTVLYCDFFYLYV). Topologically, residues 200-212 (TKVLKGKKLSLPA) are cytoplasmic. The tract at residues 204–207 (KGKK) is important for recycling of cargo proteins with the sequence motif K-D-E-L from the Golgi to the endoplasmic reticulum.

Belongs to the ERD2 family.

The protein localises to the golgi apparatus membrane. It localises to the cytoplasmic vesicle. It is found in the COPI-coated vesicle membrane. The protein resides in the endoplasmic reticulum membrane. Its subcellular location is the endoplasmic reticulum-Golgi intermediate compartment membrane. Receptor for the C-terminal sequence motif K-D-E-L that is present on endoplasmic reticulum resident proteins and that mediates their recycling from the Golgi back to the endoplasmic reticulum. This chain is ER lumen protein-retaining receptor 1-A (kdelr1-a), found in Xenopus laevis (African clawed frog).